We begin with the raw amino-acid sequence, 453 residues long: Serine/threonine-protein phosphatase 2A 55 kDa regulatory subunit B delta isoform (453 aa).

4 WD repeats span residues 32–71, 97–138, 181–219, and 230–270; these read AEAD…KGRA, EIEE…KRAE, AHTY…RSFN, and ELTE…LCDR. At S285 the chain carries Phosphoserine. WD repeat units follow at residues 289–327, 344–385, and 420–452; these read EIIS…RPVE, ENDC…DVTL, and DFNK…QDKI. Y305 is modified (phosphotyrosine). The residue at position 308 (T308) is a Phosphothreonine.

Belongs to the phosphatase 2A regulatory subunit B family. PP2A consists of a common heterodimeric core enzyme, composed of a 36 kDa catalytic subunit (subunit C) and a 65 kDa constant regulatory subunit (PR65 or subunit A), that associates with a variety of regulatory subunits. Proteins that associate with the core dimer include three families of regulatory subunits B (the R2/B/PR55/B55, R3/B''/PR72/PR130/PR59 and R5/B'/B56 families), the 48 kDa variable regulatory subunit, viral proteins, and cell signaling molecules. Interacts with IER5.

It is found in the cytoplasm. Its function is as follows. Substrate-recognition subunit of protein phosphatase 2A (PP2A) that plays a key role in cell cycle by controlling mitosis entry and exit. Involved in chromosome clustering during late mitosis by mediating dephosphorylation of MKI67. The activity of PP2A complexes containing PPP2R2D (PR55-delta) fluctuate during the cell cycle: the activity is high in interphase and low in mitosis. The sequence is that of Serine/threonine-protein phosphatase 2A 55 kDa regulatory subunit B delta isoform from Mus musculus (Mouse).